We begin with the raw amino-acid sequence, 402 residues long: Multidrug resistance protein MdtH (402 aa).

Residues 1–12 lie on the Cytoplasmic side of the membrane; the sequence is MSRVSQARNLGK. Residues 13–33 traverse the membrane as a helical segment; that stretch reads YFLLIDNMLVVLGFFVVFPLI. At 34–98 the chain is on the periplasmic side; sequence SIRFIDQMGW…GFATMGIAHE (65 aa). Residues 99 to 116 form a helical membrane-spanning segment; the sequence is PWLLWFSCFLSGLGGTLF. Residues 117–138 are Cytoplasmic-facing; the sequence is DPPRSALVVKLIRPEQRGRFFS. A helical transmembrane segment spans residues 139-159; that stretch reads LLMMQDSAGAVIGALLGSWLL. Residues 160 to 164 are Periplasmic-facing; that stretch reads QYDFR. A helical membrane pass occupies residues 165 to 185; sequence LVCATGAILFILCALFNAWLL. Over 186–213 the chain is Cytoplasmic; it reads PAWKLSTVRTPVREGMRRVMSDKRFVTY. Residues 214–234 traverse the membrane as a helical segment; that stretch reads VLTLAGYYMLAVQVMLMLPIM. Topologically, residues 235–243 are periplasmic; it reads VNDIAGSPA. Residues 244-264 form a helical membrane-spanning segment; it reads AVKWMYAIEACLSLTLLYPIA. Residues 265-276 are Cytoplasmic-facing; that stretch reads RWSEKRFRLEHR. Residues 277–297 traverse the membrane as a helical segment; the sequence is LMAGLLVMSLSMIPIGMVGNL. Residues 298–299 are Periplasmic-facing; the sequence is QQ. Residues 300-320 form a helical membrane-spanning segment; it reads LFTLICAFYIGSVIAEPARET. At 321–339 the chain is on the cytoplasmic side; that stretch reads LSASLADARARGSYMGFSR. Residues 340-360 traverse the membrane as a helical segment; sequence LGLAIGGAIGYIGGGWLFDMG. Over 361–367 the chain is Periplasmic; the sequence is KALTQPE. Residues 368-388 form a helical membrane-spanning segment; the sequence is LPWMMLGIIGFITFLALGWQF. Over 389–402 the chain is Cytoplasmic; sequence SHKRTPRRMLEPGA.

This sequence belongs to the major facilitator superfamily. DHA1 family. MdtH (TC 2.A.1.2.21) subfamily.

The protein resides in the cell inner membrane. The sequence is that of Multidrug resistance protein MdtH from Salmonella paratyphi C (strain RKS4594).